The following is a 110-amino-acid chain: Large ribosomal subunit protein eL30 (110 aa).

The protein belongs to the eukaryotic ribosomal protein eL30 family.

This Methanocaldococcus jannaschii (strain ATCC 43067 / DSM 2661 / JAL-1 / JCM 10045 / NBRC 100440) (Methanococcus jannaschii) protein is Large ribosomal subunit protein eL30 (rpl30e).